Consider the following 434-residue polypeptide: MADIIIKNGYVLTMDPEVDDIPNGVVVIEGGKIVEVAETTSATANTVIDAQGGVVMPGFVNTHTHAGMTLFRGYADDLPLAQWLQEHIWPAEAELTASDVLAGTRLACLEMIKSGTIAFADMYFFMEEVGKAVEECGLRAALSYGMIELWDDEKGTNELKKGREFVKEWNGKAEGRISVMYGPHAPNTCSKEFLSKVKEQAIADNVKIHIHVLETEAELNQMKEQYGMCSVNMLDTIDFFGPGVLAAHCIWLSDGDMDILADNNVNIAHNPVSNMKLASGVAPVMKLLDKGANVCLGTDGCASNNNLDMFDEMKTAALLQKVDTMDPTALPAKQVLEMATVNGAKALDINSGVLRKDYNADVIIIDMNKAHLSPLFDVPSQLVYSATGNDVRTTIVNGVVLMDERKVLCMNEQQVINDAKQAASDLVSRVDAKN.

Residues H63 and H65 each contribute to the Zn(2+) site. 2 residues coordinate substrate: E92 and H184. H211 serves as a coordination point for Zn(2+). Substrate-binding residues include E214 and D299. Zn(2+) is bound at residue D299.

It belongs to the metallo-dependent hydrolases superfamily. MTA/SAH deaminase family. As to quaternary structure, homotetramer. The cofactor is Zn(2+).

The enzyme catalyses 5'-deoxyadenosine + H2O + H(+) = 5'-deoxyinosine + NH4(+). It catalyses the reaction S-adenosyl-L-homocysteine + H2O + H(+) = S-inosyl-L-homocysteine + NH4(+). It carries out the reaction S-methyl-5'-thioadenosine + H2O + H(+) = S-methyl-5'-thioinosine + NH4(+). The catalysed reaction is adenosine + H2O + H(+) = inosine + NH4(+). The protein operates within amino-acid biosynthesis; S-adenosyl-L-methionine biosynthesis. Functionally, catalyzes the deamination of three SAM-derived enzymatic products, namely 5'-deoxyadenosine, S-adenosyl-L-homocysteine, and 5'-methylthioadenosine, to produce the inosine analogs. Can also deaminate adenosine. The preferred substrate for this enzyme is 5'-deoxyadenosine, but all these substrates are efficiently deaminated. Likely functions in a S-adenosyl-L-methionine (SAM) recycling pathway from S-adenosyl-L-homocysteine (SAH) produced from SAM-dependent methylation reactions. May also be involved in the recycling of 5'-deoxyadenosine, whereupon the 5'-deoxyribose moiety of 5'-deoxyinosine is further metabolized to deoxyhexoses used for the biosynthesis of aromatic amino acids in methanogens. This Methanococcoides burtonii (strain DSM 6242 / NBRC 107633 / OCM 468 / ACE-M) protein is 5'-deoxyadenosine deaminase.